An 870-amino-acid polypeptide reads, in one-letter code: Histidine biosynthesis trifunctional protein (870 aa).

The tract at residues 1 to 285 is phosphoribosyl-AMP cyclohydrolase; the sequence is METTLPLPFL…KFVVKQKGRF (285 aa). The phosphoribosyl-ATP pyrophosphohydrolase stretch occupies residues 286–367; sequence CHLDQSGCFG…FYFALTRAVA (82 aa). The histidinol dehydrogenase stretch occupies residues 368–870; that stretch reads AGVTLADIER…IRLEHMSKSN (503 aa). Positions 693 and 696 each coordinate Zn(2+). Residues glutamate 762 and histidine 763 contribute to the active site. Aspartate 796 and histidine 855 together coordinate Zn(2+).

This sequence in the C-terminal section; belongs to the histidinol dehydrogenase family. It depends on Zn(2+) as a cofactor.

It catalyses the reaction 1-(5-phospho-beta-D-ribosyl)-5'-AMP + H2O = 1-(5-phospho-beta-D-ribosyl)-5-[(5-phospho-beta-D-ribosylamino)methylideneamino]imidazole-4-carboxamide. The enzyme catalyses 1-(5-phospho-beta-D-ribosyl)-ATP + H2O = 1-(5-phospho-beta-D-ribosyl)-5'-AMP + diphosphate + H(+). It carries out the reaction L-histidinol + 2 NAD(+) + H2O = L-histidine + 2 NADH + 3 H(+). It participates in amino-acid biosynthesis; L-histidine biosynthesis; L-histidine from 5-phospho-alpha-D-ribose 1-diphosphate: step 2/9. The protein operates within amino-acid biosynthesis; L-histidine biosynthesis; L-histidine from 5-phospho-alpha-D-ribose 1-diphosphate: step 3/9. Its pathway is amino-acid biosynthesis; L-histidine biosynthesis; L-histidine from 5-phospho-alpha-D-ribose 1-diphosphate: step 9/9. In Neurospora crassa (strain ATCC 24698 / 74-OR23-1A / CBS 708.71 / DSM 1257 / FGSC 987), this protein is Histidine biosynthesis trifunctional protein (his-3).